The sequence spans 351 residues: Regulator of V-ATPase in vacuolar membrane protein 2 (351 aa).

In terms of assembly, component of the RAVE complex composed of RAV1, RAV2 and CBF3D/SKP1. Within the complex, it interacts directly with RAV1 and CBF3D. Interacts with the V-ATPase V1 subunits VMA1, VMA2 and VMA8.

Its subcellular location is the cytoplasm. It localises to the early endosome membrane. Functionally, component of the RAVE complex, which is required for stable assembly of the vacuolar ATPase complex V-ATPase under many conditions. May be required for transport between the early endosome and the late endosome/prevacuolar compartment (PVC). The protein is Regulator of V-ATPase in vacuolar membrane protein 2 (RAV2) of Saccharomyces cerevisiae (strain ATCC 204508 / S288c) (Baker's yeast).